The chain runs to 336 residues: 3-isopropylmalate dehydrogenase (336 aa).

Residues arginine 87, arginine 97, arginine 121, and aspartate 211 each contribute to the substrate site. Positions 211, 235, and 239 each coordinate Mg(2+). Residue 271–283 (GSAPDIAGQGIAD) participates in NAD(+) binding.

The protein belongs to the isocitrate and isopropylmalate dehydrogenases family. LeuB type 2 subfamily. Homodimer. It depends on Mg(2+) as a cofactor. Mn(2+) serves as cofactor.

The protein localises to the cytoplasm. The enzyme catalyses (2R,3S)-3-isopropylmalate + NAD(+) = 4-methyl-2-oxopentanoate + CO2 + NADH. The protein operates within amino-acid biosynthesis; L-leucine biosynthesis; L-leucine from 3-methyl-2-oxobutanoate: step 3/4. Its function is as follows. Catalyzes the oxidation of 3-carboxy-2-hydroxy-4-methylpentanoate (3-isopropylmalate) to 3-carboxy-4-methyl-2-oxopentanoate. The product decarboxylates to 4-methyl-2 oxopentanoate. In Mycolicibacterium paratuberculosis (strain ATCC BAA-968 / K-10) (Mycobacterium paratuberculosis), this protein is 3-isopropylmalate dehydrogenase.